Here is a 480-residue protein sequence, read N- to C-terminus: Probable WRKY transcription factor 61 (480 aa).

A disordered region spans residues 30-108; it reads NQLMAKHNEP…RNYDDNEKSS (79 aa). Basic and acidic residues-rich tracts occupy residues 57-66 and 84-106; these read REKVNEREEL and NKEE…DNEK. The WRKY DNA-binding region spans 185 to 251; the sequence is CETPTMNDGC…YEGTHNHPLP (67 aa).

The protein localises to the nucleus. Transcription factor. Interacts specifically with the W box (5'-(T)TGAC[CT]-3'), a frequently occurring elicitor-responsive cis-acting element. The protein is Probable WRKY transcription factor 61 (WRKY61) of Arabidopsis thaliana (Mouse-ear cress).